A 290-amino-acid polypeptide reads, in one-letter code: MPFDFRRFDIYRKVPKDLTQPTYTGAIISICCCLFITFLFLSELTGFIANEIVNELYVDDPDKDSGGKIDVTLNVTLPNLPCEVVGLDIQDEMGRHEVGHIDNSMKIPINNAYGCRFEGLFSINKVPGNFHVSTHSAIAQPANPDMRHIIHKLSFGNTLQVDNIHGAFNALGGADKLASKALESHDYVLKIVPTVYEDLNGKQQFSYQYTVANKAYVAYSHTGRVVPAIWFRYDLSPITVKYTERRQPMYRFITTVCAIIGGTFTVAGILDSFIFTASEAWKKIQLGKMQ.

Topologically, residues 1-26 are cytoplasmic; the sequence is MPFDFRRFDIYRKVPKDLTQPTYTGA. The helical transmembrane segment at 27–47 threads the bilayer; the sequence is IISICCCLFITFLFLSELTGF. Residues 48–254 are Lumenal-facing; sequence IANEIVNELY…RRQPMYRFIT (207 aa). N74 carries an N-linked (GlcNAc...) asparagine glycan. The helical transmembrane segment at 255-275 threads the bilayer; the sequence is TVCAIIGGTFTVAGILDSFIF. The Cytoplasmic segment spans residues 276–290; that stretch reads TASEAWKKIQLGKMQ.

Belongs to the ERGIC family.

The protein localises to the endoplasmic reticulum membrane. It is found in the endoplasmic reticulum-Golgi intermediate compartment membrane. The protein resides in the golgi apparatus membrane. Functionally, possible role in transport between endoplasmic reticulum and Golgi. This chain is Endoplasmic reticulum-Golgi intermediate compartment protein 1 (ergic1), found in Xenopus laevis (African clawed frog).